The primary structure comprises 456 residues: Amino acid transporter AVT6B (456 aa).

11 helical membrane-spanning segments follow: residues 37 to 57 (FSGAVFNLATTIIGAGIMALP), 58 to 78 (ATMKILGLIPGITIIVLMAFL), 118 to 138 (ILVSNIGVLIVYMIIIGDVLA), 164 to 184 (TFVLLVTTLTVFAPLTCFKRI), 191 to 211 (SAISVALAVVFLVITAGITII), 236 to 256 (LFTVVPVLVNAYICHYNVHSI), 273 to 293 (ALAMCSSVYVMTSLFGYLLFG), 328 to 348 (LMLVFPVVFYPLRINIDGLIF), 365 to 385 (SITAGLIAVIFLGANFIPSIW), 388 to 408 (FQFTGATAAVCIGFIFPAAVI), and 423 to 443 (IAICMIVLAVFSNAIAIYSDA).

The protein belongs to the amino acid/polyamine transporter 2 family. Amino acid/auxin permease (AAAP) (TC 2.A.18.6) subfamily.

It is found in the membrane. The protein is Amino acid transporter AVT6B of Arabidopsis thaliana (Mouse-ear cress).